The following is a 336-amino-acid chain: Sex determination protein tasselseed-2 (336 aa).

59–83 (IVTGGARGIGEAIVRLFAKHGARVV) serves as a coordination point for NAD(+). Ser-194 serves as a coordination point for substrate. Tyr-207 serves as the catalytic Proton acceptor.

It belongs to the short-chain dehydrogenases/reductases (SDR) family.

In terms of biological role, required for stage-specific floral organ abortion. The protein is Sex determination protein tasselseed-2 (TS2) of Zea mays (Maize).